The chain runs to 515 residues: 1-pyrroline-5-carboxylate dehydrogenase 2 (515 aa).

Residues E286 and C320 contribute to the active site.

The protein belongs to the aldehyde dehydrogenase family. RocA subfamily.

The catalysed reaction is L-glutamate 5-semialdehyde + NAD(+) + H2O = L-glutamate + NADH + 2 H(+). The protein operates within amino-acid degradation; L-proline degradation into L-glutamate; L-glutamate from L-proline: step 2/2. This is 1-pyrroline-5-carboxylate dehydrogenase 2 (rocA2) from Halalkalibacterium halodurans (strain ATCC BAA-125 / DSM 18197 / FERM 7344 / JCM 9153 / C-125) (Bacillus halodurans).